The primary structure comprises 292 residues: UPF0725 protein At4g28920 (292 aa).

The segment covering 1 to 17 (MSENDSSESDIEMDPEE) has biased composition (acidic residues). The interval 1-24 (MSENDSSESDIEMDPEEEKVYRRQ) is disordered.

Belongs to the UPF0725 (EMB2204) family.

This Arabidopsis thaliana (Mouse-ear cress) protein is UPF0725 protein At4g28920.